The following is a 1120-amino-acid chain: Prophage side tail fiber protein homolog StfR (1120 aa).

Disordered stretches follow at residues 129–154, 221–442, and 960–1021; these read KSAS…SARA, SAST…ATRA, and SGRA…AGAH. 3 stretches are compositionally biased toward low complexity: residues 221–239, 248–395, and 402–442; these read SAST…ARDA, SSET…SASA, and RQAS…ATRA. Residues 985-1021 show a composition bias toward polar residues; sequence DLGTKTTSSFDYGTKSTNNTGAHTHSVSGSTNSAGAH.

Belongs to the tail fiber family.

The sequence is that of Prophage side tail fiber protein homolog StfR (stfR) from Escherichia coli (strain K12).